Consider the following 278-residue polypeptide: Indole-3-glycerol phosphate synthase (278 aa).

The protein belongs to the TrpC family.

The catalysed reaction is 1-(2-carboxyphenylamino)-1-deoxy-D-ribulose 5-phosphate + H(+) = (1S,2R)-1-C-(indol-3-yl)glycerol 3-phosphate + CO2 + H2O. The protein operates within amino-acid biosynthesis; L-tryptophan biosynthesis; L-tryptophan from chorismate: step 4/5. This is Indole-3-glycerol phosphate synthase from Pseudomonas aeruginosa (strain UCBPP-PA14).